We begin with the raw amino-acid sequence, 231 residues long: 5'-methylthioadenosine/S-adenosylhomocysteine nucleosidase (231 aa).

The active-site Proton acceptor is the Glu-12. Residues Gly-78, Ile-153, and 174–175 (ME) contribute to the substrate site. Asp-198 serves as the catalytic Proton donor.

The protein belongs to the PNP/UDP phosphorylase family. MtnN subfamily.

The enzyme catalyses S-adenosyl-L-homocysteine + H2O = S-(5-deoxy-D-ribos-5-yl)-L-homocysteine + adenine. It catalyses the reaction S-methyl-5'-thioadenosine + H2O = 5-(methylsulfanyl)-D-ribose + adenine. The catalysed reaction is 5'-deoxyadenosine + H2O = 5-deoxy-D-ribose + adenine. Its pathway is amino-acid biosynthesis; L-methionine biosynthesis via salvage pathway; S-methyl-5-thio-alpha-D-ribose 1-phosphate from S-methyl-5'-thioadenosine (hydrolase route): step 1/2. Catalyzes the irreversible cleavage of the glycosidic bond in both 5'-methylthioadenosine (MTA) and S-adenosylhomocysteine (SAH/AdoHcy) to adenine and the corresponding thioribose, 5'-methylthioribose and S-ribosylhomocysteine, respectively. Also cleaves 5'-deoxyadenosine, a toxic by-product of radical S-adenosylmethionine (SAM) enzymes, into 5-deoxyribose and adenine. This Maridesulfovibrio salexigens (strain ATCC 14822 / DSM 2638 / NCIMB 8403 / VKM B-1763) (Desulfovibrio salexigens) protein is 5'-methylthioadenosine/S-adenosylhomocysteine nucleosidase.